The following is a 393-amino-acid chain: Protein FAM47E (393 aa).

Residues 326–354 (VSHKAQEENFKKELQEQEELLADLHGTVA) adopt a coiled-coil conformation.

This sequence belongs to the FAM47 family. In terms of assembly, interacts with PRMT5; the interaction is direct. Interacts with WDR77.

It is found in the nucleus. Its subcellular location is the chromosome. It localises to the cytoplasm. In terms of biological role, promotes histone methylation by localizing the arginine methyltransferase PRMT5 to chromatin. The sequence is that of Protein FAM47E (FAM47E) from Homo sapiens (Human).